The sequence spans 296 residues: Homoserine kinase (296 aa).

Position 85–95 (85–95) interacts with ATP; it reads PVARGLGSSAA.

The protein belongs to the GHMP kinase family. Homoserine kinase subfamily.

The protein localises to the cytoplasm. The catalysed reaction is L-homoserine + ATP = O-phospho-L-homoserine + ADP + H(+). It participates in amino-acid biosynthesis; L-threonine biosynthesis; L-threonine from L-aspartate: step 4/5. Catalyzes the ATP-dependent phosphorylation of L-homoserine to L-homoserine phosphate. The polypeptide is Homoserine kinase (Moorella thermoacetica (strain ATCC 39073 / JCM 9320)).